We begin with the raw amino-acid sequence, 111 residues long: uncharacterized protein (111 aa).

This is an uncharacterized protein from Escherichia coli (strain K12).